Here is a 373-residue protein sequence, read N- to C-terminus: XK-related protein 9 (373 aa).

A run of 8 helical transmembrane segments spans residues 8–28 (FMMSVLGIIIYVTDLIVDIWV), 38–58 (YVFSALALSFMLFGTLVAQCF), 166–186 (AAIMVSCCAISWSTVDYQVAL), 203–223 (ITYLFYKLFTLLSWMLSVVLL), 224–244 (LFLNVKIALFLLLFLWLLGII), 256–276 (CISMEFLYRIVVGFILIFTFF), 295–315 (VLGTLGILTVFWVCPLTIFNP), and 318–338 (FIPISITIVLTLLLGILFLIV).

This sequence belongs to the XK family. In terms of processing, undergoes proteolytic processing by caspase-3 (CASP3), caspase-6 (CASP6) and caspase-7 (CASP7) to generate the XK-related protein 9, processed form, leading to its activation.

The protein resides in the cell membrane. It carries out the reaction a 1,2-diacyl-sn-glycero-3-phospho-L-serine(in) = a 1,2-diacyl-sn-glycero-3-phospho-L-serine(out). Activated upon caspase cleavage to generate the XK-related protein 9, processed form. Does not act prior the onset of apoptosis. Its function is as follows. Phospholipid scramblase that promotes phosphatidylserine exposure on apoptotic cell surface. Phosphatidylserine is a specific marker only present at the surface of apoptotic cells and acts as a specific signal for engulfment. The polypeptide is XK-related protein 9 (Homo sapiens (Human)).